The sequence spans 64 residues: DNA gyrase inhibitor YacG (64 aa).

Cys9, Cys12, Cys28, and Cys32 together coordinate Zn(2+). Residues 45 to 64 (NAIAGAPDMSDSDGWSEDQY) are disordered. The segment covering 54-64 (SDSDGWSEDQY) has biased composition (acidic residues).

It belongs to the DNA gyrase inhibitor YacG family. Interacts with GyrB. Zn(2+) serves as cofactor.

In terms of biological role, inhibits all the catalytic activities of DNA gyrase by preventing its interaction with DNA. Acts by binding directly to the C-terminal domain of GyrB, which probably disrupts DNA binding by the gyrase. The polypeptide is DNA gyrase inhibitor YacG (Vibrio parahaemolyticus serotype O3:K6 (strain RIMD 2210633)).